Here is a 92-residue protein sequence, read N- to C-terminus: MHGTRPSLADITLILEEIPEIIDLHCDEQFDSSEEENNHQLTEPAVQAYGVVTTCCKCGRAVRLVVECGPEDIRDLEQLFLKTLNLVCPHCA.

An E7 terminal domain region spans residues 1-43; that stretch reads MHGTRPSLADITLILEEIPEIIDLHCDEQFDSSEEENNHQLTE. Positions 24-28 match the LXCXE motif; interaction with host RB1 and TMEM173/STING motif; that stretch reads LHCDE. A zinc finger lies at 55–91; it reads CCKCGRAVRLVVECGPEDIRDLEQLFLKTLNLVCPHC. The Nuclear export signal signature appears at 73-81; sequence IRDLEQLFL.

Belongs to the papillomaviridae E7 protein family. In terms of assembly, homodimer. Homooligomer. Interacts with host RB1; this interaction induces dissociation of RB1-E2F1 complex thereby disrupting RB1 activity. Interacts with host EP300; this interaction represses EP300 transcriptional activity. Interacts with protein E2; this interaction inhibits E7 oncogenic activity. Interacts with host TMEM173/STING; this interaction impairs the ability of TMEM173/STING to sense cytosolic DNA and promote the production of type I interferon (IFN-alpha and IFN-beta). Post-translationally, highly phosphorylated.

The protein localises to the host cytoplasm. It localises to the host nucleus. Its function is as follows. Plays a role in viral genome replication by driving entry of quiescent cells into the cell cycle. Stimulation of progression from G1 to S phase allows the virus to efficiently use the cellular DNA replicating machinery to achieve viral genome replication. E7 protein has both transforming and trans-activating activities. Induces the disassembly of the E2F1 transcription factor from RB1, with subsequent transcriptional activation of E2F1-regulated S-phase genes. Interferes with host histone deacetylation mediated by HDAC1 and HDAC2, leading to transcription activation. Also plays a role in the inhibition of both antiviral and antiproliferative functions of host interferon alpha. Interaction with host TMEM173/STING impairs the ability of TMEM173/STING to sense cytosolic DNA and promote the production of type I interferon (IFN-alpha and IFN-beta). This is Protein E7 from Homo sapiens (Human).